Consider the following 242-residue polypeptide: Pyridoxine 5'-phosphate synthase (242 aa).

Asn8 contributes to the 3-amino-2-oxopropyl phosphate binding site. 10–11 (DH) is a 1-deoxy-D-xylulose 5-phosphate binding site. Arg19 provides a ligand contact to 3-amino-2-oxopropyl phosphate. His44 functions as the Proton acceptor in the catalytic mechanism. 1-deoxy-D-xylulose 5-phosphate-binding residues include Arg46 and His51. Glu71 serves as the catalytic Proton acceptor. Thr101 is a 1-deoxy-D-xylulose 5-phosphate binding site. His193 acts as the Proton donor in catalysis. 3-amino-2-oxopropyl phosphate is bound by residues Gly194 and 215 to 216 (GF).

It belongs to the PNP synthase family. As to quaternary structure, homooctamer; tetramer of dimers.

Its subcellular location is the cytoplasm. It carries out the reaction 3-amino-2-oxopropyl phosphate + 1-deoxy-D-xylulose 5-phosphate = pyridoxine 5'-phosphate + phosphate + 2 H2O + H(+). It functions in the pathway cofactor biosynthesis; pyridoxine 5'-phosphate biosynthesis; pyridoxine 5'-phosphate from D-erythrose 4-phosphate: step 5/5. In terms of biological role, catalyzes the complicated ring closure reaction between the two acyclic compounds 1-deoxy-D-xylulose-5-phosphate (DXP) and 3-amino-2-oxopropyl phosphate (1-amino-acetone-3-phosphate or AAP) to form pyridoxine 5'-phosphate (PNP) and inorganic phosphate. The protein is Pyridoxine 5'-phosphate synthase of Elusimicrobium minutum (strain Pei191).